Consider the following 345-residue polypeptide: GTPase Obg (345 aa).

An Obg domain is found at 1 to 159; that stretch reads MKFLDQAKVY…KWIWLRLKLI (159 aa). Positions 160 to 327 constitute an OBG-type G domain; sequence ADAGLVGLPN…ALRALLAVID (168 aa). Residues 166–173, 191–195, 212–215, 279–282, and 308–310 contribute to the GTP site; these read GLPNAGKS, FTTLH, DIPG, SKID, and SSQ. Residues S173 and T193 each coordinate Mg(2+).

This sequence belongs to the TRAFAC class OBG-HflX-like GTPase superfamily. OBG GTPase family. In terms of assembly, monomer. Requires Mg(2+) as cofactor.

It is found in the cytoplasm. An essential GTPase which binds GTP, GDP and possibly (p)ppGpp with moderate affinity, with high nucleotide exchange rates and a fairly low GTP hydrolysis rate. Plays a role in control of the cell cycle, stress response, ribosome biogenesis and in those bacteria that undergo differentiation, in morphogenesis control. This is GTPase Obg from Azorhizobium caulinodans (strain ATCC 43989 / DSM 5975 / JCM 20966 / LMG 6465 / NBRC 14845 / NCIMB 13405 / ORS 571).